A 34-amino-acid polypeptide reads, in one-letter code: Calcitonin-like peptide 1 (34 aa).

An intrachain disulfide couples cysteine 2 to cysteine 7. Proline 34 bears the Proline amide mark.

This chain is Calcitonin-like peptide 1, found in Odorrana schmackeri (Schmacker's frog).